The primary structure comprises 120 residues: Ribonuclease P protein component 2 (120 aa).

The protein belongs to the eukaryotic/archaeal RNase P protein component 2 family. As to quaternary structure, homodimer in solution. Component of RNase P which consists of a catalytic RNA component and at least 5 protein subunits. Forms a heterotetrameric subcomplex with Rnp3. Reconstituted enzyme missing individual protein subunits is suboptimally active, showing each subunit contributes to optimization of activity.

Its subcellular location is the cytoplasm. The catalysed reaction is Endonucleolytic cleavage of RNA, removing 5'-extranucleotides from tRNA precursor.. Its function is as follows. Part of ribonuclease P, a protein complex that generates mature tRNA molecules by cleaving their 5'-ends. In Pyrococcus horikoshii (strain ATCC 700860 / DSM 12428 / JCM 9974 / NBRC 100139 / OT-3), this protein is Ribonuclease P protein component 2.